The sequence spans 443 residues: Deoxyguanosinetriphosphate triphosphohydrolase-like protein (443 aa).

Positions 66 to 259 (RLTHSLEAAQ…MELADDIAYG (194 aa)) constitute an HD domain.

The protein belongs to the dGTPase family. Type 2 subfamily.

The polypeptide is Deoxyguanosinetriphosphate triphosphohydrolase-like protein (Vibrio vulnificus (strain CMCP6)).